Reading from the N-terminus, the 331-residue chain is Phosphoribosylformylglycinamidine cyclo-ligase (331 aa).

This sequence belongs to the AIR synthase family.

The protein resides in the cytoplasm. It catalyses the reaction 2-formamido-N(1)-(5-O-phospho-beta-D-ribosyl)acetamidine + ATP = 5-amino-1-(5-phospho-beta-D-ribosyl)imidazole + ADP + phosphate + H(+). It functions in the pathway purine metabolism; IMP biosynthesis via de novo pathway; 5-amino-1-(5-phospho-D-ribosyl)imidazole from N(2)-formyl-N(1)-(5-phospho-D-ribosyl)glycinamide: step 2/2. The polypeptide is Phosphoribosylformylglycinamidine cyclo-ligase (Clostridium botulinum (strain ATCC 19397 / Type A)).